The sequence spans 294 residues: MATHGQTCARPMCIPPSYADLGKAARDIFNKGFGFGLVKLDVKTKSCSGVEFSTSGSSNTDTGKVTGTLETKYKWCEYGLTFTEKWNTDNTLGTEIAIEDQICQGLKLTFDTTFSPNTGKKSGKIKSSYKRECINLGCDVDFDFAGPAIHGSAVFGYEGWLAGYQMTFDSAKSKLTRNNFAVGYRTGDFQLHTNVNDGTEFGGSIYQKVCEDLDTSVNLAWTSGTNCTRFGIAAKYQLDPTASISAKVNNSSLIGVGYTQTLRPGVKLTLSALVDGKSINAGGHKVGLALELEA.

At A2 the chain carries N-acetylalanine. The ATP site is built by K23 and K31. An N6-acetyllysine; alternate modification is found at K31. K31 is subject to N6-succinyllysine; alternate. A Glycyl lysine isopeptide (Lys-Gly) (interchain with G-Cter in ubiquitin); alternate cross-link involves residue K31. 2 beta stranded membrane passes run 37–46 (LVKLDVKTKS) and 50–58 (VEFSTSGSS). Glycyl lysine isopeptide (Lys-Gly) (interchain with G-Cter in ubiquitin) cross-links involve residues K64 and K72. The chain crosses the membrane as a beta stranded span at residues 65-75 (VTGTLETKYKW). Phosphotyrosine is present on Y78. 3 consecutive transmembrane segments (beta stranded) span residues 80–87 (LTFTEKWN), 91–100 (TLGTEIAIED), and 106–115 (LKLTFDTTFS). Residue T118 is modified to Phosphothreonine. K120 is subject to N6-acetyllysine; alternate. K120 is covalently cross-linked (Glycyl lysine isopeptide (Lys-Gly) (interchain with G-Cter in ubiquitin); alternate). Residues K121 and K124 each participate in a glycyl lysine isopeptide (Lys-Gly) (interchain with G-Cter in ubiquitin) cross-link. Beta stranded transmembrane passes span 122-131 (SGKIKSSYKR), 134-141 (INLGCDVD), 148-156 (AIHGSAVFG), and 161-169 (LAGYQMTFD). Residue K172 forms a Glycyl lysine isopeptide (Lys-Gly) (interchain with G-Cter in ubiquitin) linkage. 6 beta stranded membrane-spanning segments follow: residues 174–186 (KLTR…GYRT), 189–196 (FQLHTNVN), 200–209 (EFGGSIYQKV), 213–222 (LDTSVNLAWT), 229–238 (RFGIAAKYQL), and 242–249 (ASISAKVN). Residue S251 is modified to Phosphoserine. NAD(+) is bound by residues 253–255 (LIG) and 271–275 (SALVD). The next 2 membrane-spanning stretches (beta stranded) occupy residues 253–262 (LIGVGYTQTL) and 265–274 (GVKLTLSALV). K277 carries the N6-acetyllysine; alternate modification. K277 participates in a covalent cross-link: Glycyl lysine isopeptide (Lys-Gly) (interchain with G-Cter in ubiquitin); alternate. A beta stranded transmembrane segment spans residues 284-293 (HKVGLALELE). Residue K285 forms a Glycyl lysine isopeptide (Lys-Gly) (interchain with G-Cter in ubiquitin) linkage.

This sequence belongs to the eukaryotic mitochondrial porin family. As to quaternary structure, monomer, homodimer and higher order oligomers; formation of higher order structures is necessary for scramblase activity. Interacts with ARMC12 in a TBC1D21-dependent manner. Interacts with KLC3. Interacts with SPATA33. Interacts with PPP3CC in a SPATA33-dependent manner. In terms of processing, ubiquitinated by PRKN during mitophagy, leading to its degradation and enhancement of mitophagy. Deubiquitinated by USP30. In terms of tissue distribution, expressed in erythrocytes (at protein level). Expressed in all tissues examined.

Its subcellular location is the mitochondrion outer membrane. It is found in the membrane. The catalysed reaction is chloride(in) = chloride(out). It catalyses the reaction K(+)(in) = K(+)(out). It carries out the reaction a 1,2-diacyl-sn-glycero-3-phospho-L-serine(in) = a 1,2-diacyl-sn-glycero-3-phospho-L-serine(out). The enzyme catalyses a 1,2-diacyl-sn-glycero-3-phosphocholine(in) = a 1,2-diacyl-sn-glycero-3-phosphocholine(out). The catalysed reaction is a 1,2-diacyl-sn-glycero-3-phospho-(1D-myo-inositol)(in) = a 1,2-diacyl-sn-glycero-3-phospho-(1D-myo-inositol)(out). Its function is as follows. Non-selective voltage-gated ion channel that mediates the transport of anions and cations through the mitochondrion outer membrane and plasma membrane. The channel adopts an open conformation at zero mV and a closed conformation at both positive and negative potentials. There are two populations of channels; the main that functions in a lower open-state conductance with lower ion selectivity, that switch, in a voltage-dependent manner, from the open to a low-conducting 'closed' state and the other that has a normal ion selectivity in the typical high conductance, 'open' state. Binds various lipids, including the sphingolipid ceramide, the phospholipid phosphatidylcholine, and the sterols cholesterol and oxysterol. Binding of ceramide promotes the mitochondrial outer membrane permeabilization (MOMP) apoptotic pathway. Functionally, catalyzes the scrambling of phospholipids across the outer mitochondrial membrane; the mechanism is unrelated to channel activity and is capable of translocating both anionic and zwitterionic phospholipids. The sequence is that of Non-selective voltage-gated ion channel VDAC2 from Homo sapiens (Human).